Here is a 278-residue protein sequence, read N- to C-terminus: Tyrosine-protein phosphatase pmp1 (278 aa).

The 155-residue stretch at 60 to 214 folds into the Tyrosine-protein phosphatase domain; sequence GPVCIYPPNI…LSEYQQIIRK (155 aa). Cys-158 serves as the catalytic Phosphocysteine intermediate. The tract at residues 217-278 is disordered; that stretch reads SQGPYQSSSL…SSGSISNDAS (62 aa). Polar residues predominate over residues 252–278; the sequence is SPSTSESSMFTNLRRTRSSGSISNDAS.

Belongs to the protein-tyrosine phosphatase family. Non-receptor class dual specificity subfamily.

The enzyme catalyses O-phospho-L-tyrosyl-[protein] + H2O = L-tyrosyl-[protein] + phosphate. Dual specificity phosphatase that dephosphorylates MAP kinase pmk1 on a Tyr. Has a role in chloride ion homeostasis by inactivating this pmk1 MAP kinase pathway. This Schizosaccharomyces pombe (strain 972 / ATCC 24843) (Fission yeast) protein is Tyrosine-protein phosphatase pmp1 (pmp1).